Consider the following 232-residue polypeptide: uncharacterized protein (232 aa).

This is an uncharacterized protein from Thermoproteus tenax (TTV1).